The following is a 200-amino-acid chain: dTTP/UTP pyrophosphatase (200 aa).

The Proton acceptor role is filled by Asp81.

Belongs to the Maf family. YhdE subfamily. Requires a divalent metal cation as cofactor.

The protein resides in the cytoplasm. It catalyses the reaction dTTP + H2O = dTMP + diphosphate + H(+). The enzyme catalyses UTP + H2O = UMP + diphosphate + H(+). Functionally, nucleoside triphosphate pyrophosphatase that hydrolyzes dTTP and UTP. May have a dual role in cell division arrest and in preventing the incorporation of modified nucleotides into cellular nucleic acids. This chain is dTTP/UTP pyrophosphatase, found in Cupriavidus metallidurans (strain ATCC 43123 / DSM 2839 / NBRC 102507 / CH34) (Ralstonia metallidurans).